The primary structure comprises 178 residues: Ribosome maturation factor RimM (178 aa).

The PRC barrel domain occupies 101–178 (DGEYYWYQLQ…EMKVEWDADF (78 aa)).

This sequence belongs to the RimM family. As to quaternary structure, binds ribosomal protein uS19.

The protein localises to the cytoplasm. Its function is as follows. An accessory protein needed during the final step in the assembly of 30S ribosomal subunit, possibly for assembly of the head region. Essential for efficient processing of 16S rRNA. May be needed both before and after RbfA during the maturation of 16S rRNA. It has affinity for free ribosomal 30S subunits but not for 70S ribosomes. In Pseudomonas fluorescens (strain ATCC BAA-477 / NRRL B-23932 / Pf-5), this protein is Ribosome maturation factor RimM.